The sequence spans 443 residues: Glutamate--tRNA ligase 1 (443 aa).

Positions 9-19 (PSPTGYLHVGN) match the 'HIGH' region motif. A 'KMSKS' region motif is present at residues 238-242 (KISKR). Position 241 (K241) interacts with ATP.

It belongs to the class-I aminoacyl-tRNA synthetase family. Glutamate--tRNA ligase type 1 subfamily. In terms of assembly, monomer.

The protein localises to the cytoplasm. The catalysed reaction is tRNA(Glu) + L-glutamate + ATP = L-glutamyl-tRNA(Glu) + AMP + diphosphate. Its function is as follows. Catalyzes the attachment of glutamate to tRNA(Glu) in a two-step reaction: glutamate is first activated by ATP to form Glu-AMP and then transferred to the acceptor end of tRNA(Glu). This Ehrlichia ruminantium (strain Welgevonden) protein is Glutamate--tRNA ligase 1.